The sequence spans 317 residues: DNA-directed RNA polymerase subunit alpha (317 aa).

An alpha N-terminal domain (alpha-NTD) region spans residues 1–230 (MIEIEMEKPK…EHLNLFITLT (230 aa)). The interval 247 to 317 (KEKVLEMTIE…LGLGLRPSDE (71 aa)) is alpha C-terminal domain (alpha-CTD).

This sequence belongs to the RNA polymerase alpha chain family. Homodimer. The RNAP catalytic core consists of 2 alpha, 1 beta, 1 beta' and 1 omega subunit. When a sigma factor is associated with the core the holoenzyme is formed, which can initiate transcription.

The catalysed reaction is RNA(n) + a ribonucleoside 5'-triphosphate = RNA(n+1) + diphosphate. Functionally, DNA-dependent RNA polymerase catalyzes the transcription of DNA into RNA using the four ribonucleoside triphosphates as substrates. This is DNA-directed RNA polymerase subunit alpha from Alkaliphilus oremlandii (strain OhILAs) (Clostridium oremlandii (strain OhILAs)).